A 366-amino-acid chain; its full sequence is C-X-C chemokine receptor type 3 (366 aa).

At 1–55 (MVPEMSERQEFQASEFAYLLENSSYDYGENETYFCCTSPPCPQDFSLNFDRTFLP) the chain is on the extracellular side. An N-linked (GlcNAc...) asparagine glycan is attached at Asn-22. A sulfotyrosine mark is found at Tyr-25 and Tyr-27. Asn-30 carries an N-linked (GlcNAc...) asparagine glycan. A helical membrane pass occupies residues 56–76 (VLYSLLFVLGLLGNGVVAVVL). Residues 77 to 88 (LSQRAALSSTDT) lie on the Cytoplasmic side of the membrane. The chain crosses the membrane as a helical span at residues 89 to 109 (FLLHLAVADALLVLTLPLWAV). The Extracellular portion of the chain corresponds to 110 to 124 (DAAIQWVFGSGLCKV). A disulfide bridge links Cys-122 with Cys-201. A helical membrane pass occupies residues 125 to 145 (AGALFNINFYAGALLLACISF). Residues 146 to 167 (DRYLSIVHATQFYRRGPPARVA) are Cytoplasmic-facing. Residues 168 to 188 (LTCVAVWGLCLLFALPDFIFL) form a helical membrane-spanning segment. Topologically, residues 189 to 221 (SSHHDNRLNATHCQYNFPQEGRTALRVLQLVAG) are extracellular. An N-linked (GlcNAc...) asparagine glycan is attached at Asn-197. A helical membrane pass occupies residues 222–242 (FLLPLLVMAYCYARILTVLLV). At 243–254 (SRGQRRLRAMRL) the chain is on the cytoplasmic side. Residues 255-275 (VVVVVVAFALCWTPYHLVVLV) form a helical membrane-spanning segment. The Extracellular portion of the chain corresponds to 276 to 299 (DTLMDLGALARNCGRESRVDVAKS). Residues 300–320 (VTSGMGYMHCCLNPLLYAFVG) traverse the membrane as a helical segment. The Cytoplasmic segment spans residues 321–366 (VKFRERMWVLLMRLGCPDQRGHQRQPSASRRDSSWSETTEASYSGL). The interval 339–366 (QRGHQRQPSASRRDSSWSETTEASYSGL) is disordered. Residues 355 to 366 (WSETTEASYSGL) show a composition bias toward polar residues.

The protein belongs to the G-protein coupled receptor 1 family. In terms of assembly, homomer. Forms heteromers with ACKR4. Interacts with PF4/CXCL4. Post-translationally, sulfation on Tyr-25 and Tyr-27 is essential for CXCL10 binding. N-glycosylated.

The protein localises to the cell membrane. Receptor for the C-X-C chemokine CXCL9, CXCL10 and CXCL11 and mediates the proliferation, survival and angiogenic activity of mesangial cells through a heterotrimeric G-protein signaling pathway. Probably promotes cell chemotaxis response. Binds to CCL21. Upon activation by PF4, induces activated T-lymphocytes migration mediated via downstream Ras/extracellular signal-regulated kinase (ERK) signaling. This chain is C-X-C chemokine receptor type 3 (CXCR3), found in Capra hircus (Goat).